The following is a 666-amino-acid chain: ATP synthase subunit alpha 2 (666 aa).

Gly182 to Thr189 is an ATP binding site. Residues Met527 to Arg666 form a disordered region. Basic and acidic residues predominate over residues Ala545–Ala590. The segment covering Ala591 to Pro601 has biased composition (low complexity). A compositionally biased stretch (basic and acidic residues) spans Ala623 to Ala641.

This sequence belongs to the ATPase alpha/beta chains family. As to quaternary structure, F-type ATPases have 2 components, CF(1) - the catalytic core - and CF(0) - the membrane proton channel. CF(1) has five subunits: alpha(3), beta(3), gamma(1), delta(1), epsilon(1). CF(0) has three main subunits: a(1), b(2) and c(9-12). The alpha and beta chains form an alternating ring which encloses part of the gamma chain. CF(1) is attached to CF(0) by a central stalk formed by the gamma and epsilon chains, while a peripheral stalk is formed by the delta and b chains.

The protein localises to the cell inner membrane. It carries out the reaction ATP + H2O + 4 H(+)(in) = ADP + phosphate + 5 H(+)(out). In terms of biological role, produces ATP from ADP in the presence of a proton gradient across the membrane. The alpha chain is a regulatory subunit. The protein is ATP synthase subunit alpha 2 of Burkholderia pseudomallei (strain K96243).